Here is a 447-residue protein sequence, read N- to C-terminus: Argininosuccinate synthase (447 aa).

ATP-binding positions include 17–25 and Ala43; that span reads AFSGGLDTS. Tyr99 provides a ligand contact to L-citrulline. Residues Gly129 and Thr131 each coordinate ATP. L-aspartate-binding residues include Thr131, Asn135, and Asp136. L-citrulline is bound at residue Asn135. Position 136 (Asp136) interacts with ATP. Positions 139 and 192 each coordinate L-citrulline. ATP is bound at residue Asp194. Thr201, Glu203, and Glu280 together coordinate L-citrulline.

The protein belongs to the argininosuccinate synthase family. Type 2 subfamily. In terms of assembly, homotetramer.

Its subcellular location is the cytoplasm. The catalysed reaction is L-citrulline + L-aspartate + ATP = 2-(N(omega)-L-arginino)succinate + AMP + diphosphate + H(+). The protein operates within amino-acid biosynthesis; L-arginine biosynthesis; L-arginine from L-ornithine and carbamoyl phosphate: step 2/3. In Salmonella newport (strain SL254), this protein is Argininosuccinate synthase.